The chain runs to 460 residues: Benzyl alcohol O-benzoyltransferase (460 aa).

Catalysis depends on proton acceptor residues His167 and Asp382.

The protein belongs to the plant acyltransferase family.

It carries out the reaction benzyl alcohol + benzoyl-CoA = benzyl benzoate + CoA. In terms of biological role, probably involved in the formation of volatile ester benzylbenzoate. The polypeptide is Benzyl alcohol O-benzoyltransferase (HSR201) (Nicotiana tabacum (Common tobacco)).